Reading from the N-terminus, the 382-residue chain is Opsin-VA (382 aa).

The Extracellular segment spans residues 1-35 (MELFPVAVNGVSHAEDPFSGPLTFIAPWNYKVLAT). Residues 36–56 (LMFVVTAASLSENFAVMLVTF) traverse the membrane as a helical segment. Over 57 to 67 (RFTQLRKPLNY) the chain is Cytoplasmic. A helical membrane pass occupies residues 68-88 (IIVNLSLADFLVSLTGGTISF). Residues 89-103 (LTNYHGYFFLGKWAC) lie on the Extracellular side of the membrane. An intrachain disulfide couples Cys103 to Cys180. A helical transmembrane segment spans residues 104–124 (VLEGFAVTYFGIVALWSLAVL). Over 125 to 147 (AFERFFVICRPLGNIRLRGKHAA) the chain is Cytoplasmic. A helical membrane pass occupies residues 148–168 (LGLLFVWTFSFIWTIPPVLGW). Residues 169-193 (SSYTVSKIGTTCEPNWYSGNFHDHT) lie on the Extracellular side of the membrane. A helical transmembrane segment spans residues 194–214 (FIIAFFITCFILPLGVIVVCY). Residues 215–244 (CKLIKKLRKVSNTHGRLGNARKPERQVTRM) lie on the Cytoplasmic side of the membrane. The helical transmembrane segment at 245 to 265 (VVVMIVAFMVAWTPYAAFSIV) threads the bilayer. Over 266 to 279 (VTAHPSIHLDPRLA) the chain is Extracellular. The chain crosses the membrane as a helical span at residues 280–300 (AAPAFFSKTAAVYNPVIYVFM). N6-(retinylidene)lysine is present on Lys287. The Cytoplasmic segment spans residues 301–382 (NKQFRKCLVQ…PIPENKVCPM (82 aa)). The segment covering 330–346 (RQGMTNESHTGEMSTIA) has biased composition (polar residues). The disordered stretch occupies residues 330–371 (RQGMTNESHTGEMSTIASRIPKDGSIPEKTQEHPGERRSLAH). The span at 349–368 (IPKDGSIPEKTQEHPGERRS) shows a compositional bias: basic and acidic residues.

Belongs to the G-protein coupled receptor 1 family. Opsin subfamily. As to expression, expressed in a subset of retinal horizontal cells as well as in retinal ganglion cells.

The protein localises to the membrane. The sequence is that of Opsin-VA from Rutilus rutilus (Roach).